We begin with the raw amino-acid sequence, 272 residues long: Phosphatidylglycerol--prolipoprotein diacylglyceryl transferase (272 aa).

A run of 7 helical transmembrane segments spans residues 17 to 37 (LQVH…WGLA), 55 to 75 (LVFY…VLFY), 90 to 110 (VWTG…AMLF), 125 to 145 (FVAP…FIGG), 174 to 194 (PSQI…LWWF), 202 to 222 (MAVS…MEFF), and 230 to 250 (GFIL…MLLI). Arg-138 lines the a 1,2-diacyl-sn-glycero-3-phospho-(1'-sn-glycerol) pocket.

It belongs to the Lgt family.

It localises to the cell inner membrane. It carries out the reaction L-cysteinyl-[prolipoprotein] + a 1,2-diacyl-sn-glycero-3-phospho-(1'-sn-glycerol) = an S-1,2-diacyl-sn-glyceryl-L-cysteinyl-[prolipoprotein] + sn-glycerol 1-phosphate + H(+). It functions in the pathway protein modification; lipoprotein biosynthesis (diacylglyceryl transfer). Its function is as follows. Catalyzes the transfer of the diacylglyceryl group from phosphatidylglycerol to the sulfhydryl group of the N-terminal cysteine of a prolipoprotein, the first step in the formation of mature lipoproteins. The sequence is that of Phosphatidylglycerol--prolipoprotein diacylglyceryl transferase from Acinetobacter baumannii (strain AB307-0294).